We begin with the raw amino-acid sequence, 519 residues long: O-fucosyltransferase 31 (519 aa).

A helical; Signal-anchor for type II membrane protein transmembrane segment spans residues Ala-18–Leu-38. Asn-131 carries N-linked (GlcNAc...) asparagine glycosylation. His-302 to Arg-304 serves as a coordination point for substrate. N-linked (GlcNAc...) asparagine glycans are attached at residues Asn-373 and Asn-474.

This sequence belongs to the glycosyltransferase GT106 family.

Its subcellular location is the membrane. It functions in the pathway glycan metabolism. The protein is O-fucosyltransferase 31 of Arabidopsis thaliana (Mouse-ear cress).